The following is a 192-amino-acid chain: 7-methyl-GTP pyrophosphatase (192 aa).

Asp69 functions as the Proton acceptor in the catalytic mechanism.

This sequence belongs to the Maf family. YceF subfamily. Requires a divalent metal cation as cofactor.

It is found in the cytoplasm. The catalysed reaction is N(7)-methyl-GTP + H2O = N(7)-methyl-GMP + diphosphate + H(+). In terms of biological role, nucleoside triphosphate pyrophosphatase that hydrolyzes 7-methyl-GTP (m(7)GTP). May have a dual role in cell division arrest and in preventing the incorporation of modified nucleotides into cellular nucleic acids. This is 7-methyl-GTP pyrophosphatase (maf-2) from Pseudomonas putida (strain ATCC 47054 / DSM 6125 / CFBP 8728 / NCIMB 11950 / KT2440).